A 305-amino-acid chain; its full sequence is Probable aspartoacylase (305 aa).

Zn(2+) contacts are provided by histidine 13 and glutamate 16. Substrate is bound by residues arginine 55 and 62 to 63 (NR). Zn(2+) is bound at residue histidine 105. The substrate site is built by glutamate 163 and tyrosine 273.

This sequence belongs to the AspA/AstE family. Aspartoacylase subfamily. Zn(2+) is required as a cofactor.

It catalyses the reaction an N-acyl-L-aspartate + H2O = a carboxylate + L-aspartate. The polypeptide is Probable aspartoacylase (Prochlorococcus marinus (strain NATL1A)).